A 305-amino-acid polypeptide reads, in one-letter code: RNA-binding protein with serine-rich domain 1 (305 aa).

Residues 1–10 (MDLSGVKKKS) show a composition bias toward basic residues. The necessary for interaction with SRP54, nuclear localization and exon-skipping stretch occupies residues 1 to 161 (MDLSGVKKKS…KRRSPSPKPT (161 aa)). A disordered region spans residues 1–170 (MDLSGVKKKS…TKVHIGRLTR (170 aa)). The tract at residues 1-220 (MDLSGVKKKS…ENPDEAEKAL (220 aa)) is necessary for interaction with the cleaved p110 isoform of CDC2L1. Glycyl lysine isopeptide (Lys-Gly) (interchain with G-Cter in SUMO2) cross-links involve residues K7 and K15. A compositionally biased stretch (basic and acidic residues) spans 33-59 (DRSDEKSKDRSKDKGATKESSEKDRGR). S53 is subject to Phosphoserine; by CK2. Positions 68-126 (ASSGSSSTRSRSSSTSSSGSSTSTGSSSGSSSSSASSRSGSSSTSRSSSSSSSSGSPSP) are enriched in low complexity. Residues 69 to 121 (SSGSSSTRSRSSSTSSSGSSTSTGSSSGSSSSSASSRSGSSSTSRSSSSSSSS) form a necessary for interactions with UPF2 and UPF3B and UPF2-dependent NMD region. Basic residues-rich tracts occupy residues 127 to 143 (SRRRHDNRRRSRSKSKP) and 151 to 167 (RKRRSPSPKPTKVHIGR). Residues S155 and S157 each carry the phosphoserine modification. Residues 156–242 (PSPKPTKVHI…ITATAVLAPW (87 aa)) form a necessary for interaction with PNN and exon-skipping region. The tract at residues 159–244 (KPTKVHIGRL…ATAVLAPWPR (86 aa)) is interaction with SAP18 and ACIN1. The residue at position 161 (T161) is a Phosphothreonine. In terms of domain architecture, RRM spans 161-240 (TKVHIGRLTR…QEITATAVLA (80 aa)). N6-acetyllysine is present on K218. A necessary for interaction with TRA2B, nuclear localization and exon-skipping region spans residues 238–305 (VLAPWPRPPP…RSRSSSNSSR (68 aa)). Residues 240–305 (APWPRPPPRR…RSRSSSNSSR (66 aa)) form a disordered region. Residues 242–262 (WPRPPPRRFSPPRRMLPPPPM) show a composition bias toward pro residues. Over residues 266–298 (SPPRMRRRSRSPRRRSPVRRRSRSPGRRRHRSR) the composition is skewed to basic residues.

It belongs to the splicing factor SR family. As to quaternary structure, found in mRNA splicing-dependent exon junction complexes (EJC). Found in a post-splicing complex with NXF1, RBM8A, UPF1, UPF2, UPF3A, UPF3B and RNPS1. Component of the heterotrimeric ASAP (apoptosis- and splicing-associated protein) and PSAP complexes consisting of RNPS1, SAP18 and either ACIN1 or PNN, respectively; the ASAP and PSAP complexes probably are formed mutually exclusive. Component of the active spliceosome. Associates with polysomes. Interacts with the cleaved p110 isoform of CDC2L1, CSNK2A1, PNN, SART3, SRP54, SRRM1 and TRA2B/SFRS10. Post-translationally, phosphorylated on one or more of the four Ser/Thr residues (Ser-43, Thr-49, Ser-52 or Ser-53). Ser-53 phosphorylation site is important for splicing and translation stimulation activity in vitro. Ubiquitous.

It is found in the nucleus. The protein localises to the nucleus speckle. Its subcellular location is the cytoplasm. Its function is as follows. Part of pre- and post-splicing multiprotein mRNP complexes. Auxiliary component of the splicing-dependent multiprotein exon junction complex (EJC) deposited at splice junction on mRNAs. The EJC is a dynamic structure consisting of core proteins and several peripheral nuclear and cytoplasmic associated factors that join the complex only transiently either during EJC assembly or during subsequent mRNA metabolism. Component of the ASAP and PSAP complexes which bind RNA in a sequence-independent manner and are proposed to be recruited to the EJC prior to or during the splicing process and to regulate specific excision of introns in specific transcription subsets. The ASAP complex can inhibit RNA processing during in vitro splicing reactions. The ASAP complex promotes apoptosis and is disassembled after induction of apoptosis. Enhances the formation of the ATP-dependent A complex of the spliceosome. Involved in both constitutive splicing and, in association with SRP54 and TRA2B/SFRS10, in distinctive modulation of alternative splicing in a substrate-dependent manner. Involved in the splicing modulation of BCL2L1/Bcl-X (and probably other apoptotic genes); specifically inhibits formation of proapoptotic isoforms such as Bcl-X(S); the activity is different from the established EJC assembly and function. Participates in mRNA 3'-end cleavage. Involved in UPF2-dependent nonsense-mediated decay (NMD) of mRNAs containing premature stop codons. Also mediates increase of mRNA abundance and translational efficiency. Binds spliced mRNA 20-25 nt upstream of exon-exon junctions. The chain is RNA-binding protein with serine-rich domain 1 (RNPS1) from Homo sapiens (Human).